Consider the following 299-residue polypeptide: MEFEQRIKAYRFVAYSAVAFSVVAVLSVCITLPMVHNYVHHVKRTMNQEVQFCRGSAKDIWTEVNELKSIQHANRTARQSGYDAGVNGGSASTGGCDACCLPGAAGPAGTPGKPGRPGKPGAPGLPGNPGHPPQQPCDPITPPPCQPCPQGPPGPPGPPGPSGDAGGNGNPGSPGQDGQPGAPGNKGPSGPNGNPGAPGAPGQPGQDAPSEPITPGAPGPQGTPGPQGPPGQPGQPGHDGQPGAPGPKGPNGNPGQPGADGNPGAPGQSGTPGGVGEKGICPKYCAIDGGVFFEDGTRR.

The first 27 residues, 1-27, serve as a signal peptide directing secretion; that stretch reads MEFEQRIKAYRFVAYSAVAFSVVAVLS. Triple-helical region stretches follow at residues 103–132, 151–177, 181–202, and 216–278; these read GAAGPAGTPGKPGRPGKPGAPGLPGNPGHP, GPPGPPGPPGPSGDAGGNGNPGSPGQD, GAPGNKGPSGPNGNPGAPGAPG, and GAPG…VGEK. The tract at residues 107-278 is disordered; sequence PAGTPGKPGR…SGTPGGVGEK (172 aa). Over residues 129–161 the composition is skewed to pro residues; it reads PGHPPQQPCDPITPPPCQPCPQGPPGPPGPPGP. Over residues 163–172 the composition is skewed to gly residues; sequence GDAGGNGNPG. Low complexity predominate over residues 173–197; sequence SPGQDGQPGAPGNKGPSGPNGNPGA. A compositionally biased stretch (pro residues) spans 215 to 233; that stretch reads PGAPGPQGTPGPQGPPGQP. A compositionally biased stretch (low complexity) spans 250–268; sequence PNGNPGQPGADGNPGAPGQ.

The protein belongs to the cuticular collagen family. As to quaternary structure, collagen polypeptide chains are complexed within the cuticle by disulfide bonds and other types of covalent cross-links.

In terms of biological role, nematode cuticles are composed largely of collagen-like proteins. The cuticle functions both as an exoskeleton and as a barrier to protect the worm from its environment. The sequence is that of Putative cuticle collagen 155 (col-155) from Caenorhabditis elegans.